The chain runs to 90 residues: Small ribosomal subunit protein uS15c (90 aa).

Belongs to the universal ribosomal protein uS15 family. Part of the 30S ribosomal subunit.

The protein localises to the plastid. The protein resides in the chloroplast. The polypeptide is Small ribosomal subunit protein uS15c (rps15) (Gossypium barbadense (Sea Island cotton)).